A 185-amino-acid polypeptide reads, in one-letter code: Gastrokine-1 (185 aa).

An N-terminal signal peptide occupies residues 1–20 (MKFTIVFAGLLGVFLAPALA). The 97-residue stretch at 54–150 (NNGWDSWNSI…MCRGIPTYMA (97 aa)) folds into the BRICHOS domain. A disulfide bond links cysteine 81 and cysteine 142.

It belongs to the gastrokine family. As to expression, expressed in stomach (at protein level). No expression is detected in cancer tissue or gastric cancer cell lines.

The protein localises to the secreted. It localises to the cytoplasmic granule. It is found in the golgi apparatus. In terms of biological role, has mitogenic activity and may be involved in maintaining the integrity of the gastric mucosal epithelium. This is Gastrokine-1 (GKN1) from Homo sapiens (Human).